The primary structure comprises 378 residues: MIDSRADHGLRFGIEEEFFLLDATDLDIARTAPSGFLEACRAALGEHFAEEMFECQVEVASPVFADLAQAARFHGRARQRLAQLAAGFGLRALCVGTHPFADWRRARSNPAAHFARLFEDQGRVARRSLVCGLHVHVEIPASHDRMVVLQQVLPWLPLLLALSASSPFRGGRRSGLASYRRALCGEWPRMNIPPALPDEDAYRRHLALLRESGCIREDGQVWWMVRPSSHVPTLELRICDACPRLADALCLAGLFRALVGQALLAGDAPAGPAARDACLEENYWQAMRHGCAGRYLVDGRCVNARDWLERAWRQCHPQARQGNEWAYGHAQRLLEENSADRQLQRYQALRAEGRGRQAALRRLVEELLEENLQALPAI.

The protein belongs to the glutamate--cysteine ligase type 2 family. YbdK subfamily.

The catalysed reaction is L-cysteine + L-glutamate + ATP = gamma-L-glutamyl-L-cysteine + ADP + phosphate + H(+). ATP-dependent carboxylate-amine ligase which exhibits weak glutamate--cysteine ligase activity. The chain is Putative glutamate--cysteine ligase 2 from Pseudomonas paraeruginosa (strain DSM 24068 / PA7) (Pseudomonas aeruginosa (strain PA7)).